Here is a 503-residue protein sequence, read N- to C-terminus: Ribose import ATP-binding protein RbsA (503 aa).

2 ABC transporter domains span residues 10–246 (LEVR…VGRD) and 256–500 (VEPG…TGSE). ATP is bound at residue 42–49 (GENGAGKS).

The protein belongs to the ABC transporter superfamily. Ribose importer (TC 3.A.1.2.1) family. As to quaternary structure, the complex is composed of an ATP-binding protein (RbsA), two transmembrane proteins (RbsC) and a solute-binding protein (RbsB).

The protein localises to the cell membrane. The enzyme catalyses D-ribose(out) + ATP + H2O = D-ribose(in) + ADP + phosphate + H(+). Functionally, part of the ABC transporter complex RbsABC involved in ribose import. Responsible for energy coupling to the transport system. The protein is Ribose import ATP-binding protein RbsA of Rhodococcus jostii (strain RHA1).